The following is a 465-amino-acid chain: A-type ATP synthase subunit B (465 aa).

The protein belongs to the ATPase alpha/beta chains family. In terms of assembly, has multiple subunits with at least A(3), B(3), C, D, E, F, H, I and proteolipid K(x).

It is found in the cell membrane. Component of the A-type ATP synthase that produces ATP from ADP in the presence of a proton gradient across the membrane. The B chain is a regulatory subunit. This chain is A-type ATP synthase subunit B, found in Thermococcus onnurineus (strain NA1).